The chain runs to 377 residues: Leucine aminopeptidase A (377 aa).

Residues 1–18 (MRFLPCIATLAATASALA) form the signal peptide. Positions 19 to 79 (IGDHVRSDDQ…SNKKQKLAVT (61 aa)) are excised as a propeptide. A glycan (N-linked (GlcNAc...) asparagine) is linked at N87. 4 residues coordinate Zn(2+): H176, D195, E234, and D261. The N-linked (GlcNAc...) asparagine glycan is linked to N288. C310 and C314 are disulfide-bonded. H343 contributes to the Zn(2+) binding site.

The protein belongs to the peptidase M28 family. M28E subfamily. As to quaternary structure, monomer. Requires Zn(2+) as cofactor.

Its subcellular location is the secreted. Its activity is regulated as follows. Calcium, magnesium and manganese cations reduce peptidase activity to 20.3-51.3 percent. The metal ion chelating reagent EDTA almost completely inhibits activity. The protease inhibitor bacitracin and the aminopeptidase B inhibitor bestatin, as well as DTT and beta-mercaptoethanol act also as lap A inhibitorsD. Functionally, extracellular aminopeptidase that allows assimilation of proteinaceous substrates. The sequence is that of Leucine aminopeptidase A (lapA) from Aspergillus oryzae (strain ATCC 42149 / RIB 40) (Yellow koji mold).